A 195-amino-acid polypeptide reads, in one-letter code: Proteasome subunit beta 1 (195 aa).

A propeptide spans 1 to 6 (removed in mature form; by autocatalysis); the sequence is MEELPA. The Nucleophile role is filled by T7.

It belongs to the peptidase T1B family. As to quaternary structure, the 20S proteasome core is composed of 14 alpha and 14 beta subunits that assemble into four stacked heptameric rings, resulting in a barrel-shaped structure. The two inner rings, each composed of seven catalytic beta subunits, are sandwiched by two outer rings, each composed of seven alpha subunits. The catalytic chamber with the active sites is on the inside of the barrel. Has a gated structure, the ends of the cylinder being occluded by the N-termini of the alpha-subunits. Is capped at one or both ends by the proteasome regulatory ATPase, PAN.

It is found in the cytoplasm. The catalysed reaction is Cleavage of peptide bonds with very broad specificity.. The formation of the proteasomal ATPase PAN-20S proteasome complex, via the docking of the C-termini of PAN into the intersubunit pockets in the alpha-rings, triggers opening of the gate for substrate entry. Interconversion between the open-gate and close-gate conformations leads to a dynamic regulation of the 20S proteasome proteolysis activity. Its function is as follows. Component of the proteasome core, a large protease complex with broad specificity involved in protein degradation. This Sulfolobus acidocaldarius (strain ATCC 33909 / DSM 639 / JCM 8929 / NBRC 15157 / NCIMB 11770) protein is Proteasome subunit beta 1.